A 130-amino-acid polypeptide reads, in one-letter code: Small ribosomal subunit protein uS9 (130 aa).

The protein belongs to the universal ribosomal protein uS9 family.

This Enterococcus faecalis (strain ATCC 700802 / V583) protein is Small ribosomal subunit protein uS9.